The primary structure comprises 420 residues: Pyridinium-3,5-bisthiocarboxylic acid mononucleotide nickel insertion protein (420 aa).

The protein belongs to the LarC family.

The enzyme catalyses Ni(II)-pyridinium-3,5-bisthiocarboxylate mononucleotide = pyridinium-3,5-bisthiocarboxylate mononucleotide + Ni(2+). Involved in the biosynthesis of a nickel-pincer cofactor ((SCS)Ni(II) pincer complex). Binds Ni(2+), and functions in nickel delivery to pyridinium-3,5-bisthiocarboxylic acid mononucleotide (P2TMN), to form the mature cofactor. Is required for the activation of the lactate racemase LarA. May also be involved in the activation of other nickel-pincer cofactor-dependent enzymes. The protein is Pyridinium-3,5-bisthiocarboxylic acid mononucleotide nickel insertion protein of Lactiplantibacillus plantarum (strain ATCC BAA-793 / NCIMB 8826 / WCFS1) (Lactobacillus plantarum).